The primary structure comprises 57 residues: Large ribosomal subunit protein uL30 (57 aa).

It belongs to the universal ribosomal protein uL30 family. In terms of assembly, part of the 50S ribosomal subunit.

The chain is Large ribosomal subunit protein uL30 from Buchnera aphidicola subsp. Cinara cedri (strain Cc).